The following is a 542-amino-acid chain: Peptide chain release factor 3 (542 aa).

Residues 14–283 form the tr-type G domain; sequence ELRRNFAIIS…YFLEYALKPG (270 aa). Residues 23–30, 91–95, and 145–148 contribute to the GTP site; these read SHPDAGKT, DTPGH, and NKLD.

Belongs to the TRAFAC class translation factor GTPase superfamily. Classic translation factor GTPase family. PrfC subfamily.

Its subcellular location is the cytoplasm. In terms of biological role, increases the formation of ribosomal termination complexes and stimulates activities of RF-1 and RF-2. It binds guanine nucleotides and has strong preference for UGA stop codons. It may interact directly with the ribosome. The stimulation of RF-1 and RF-2 is significantly reduced by GTP and GDP, but not by GMP. The sequence is that of Peptide chain release factor 3 from Nostoc punctiforme (strain ATCC 29133 / PCC 73102).